The chain runs to 377 residues: MATSQVLHILPKPSYEHAFNSQRTEFVTTTATNQVELYEQDGNGWKHARTFSDHDKIVTCVDWAPKSNRIVTCSQDRNAYVYEKRPDGTWKQTLVLLRLNRAATFVRWSPNEDKFAVGSGARVISVCYFEQENDWWVSKHLKRPLRSTILSLDWHPNNVLLAAGCADRKAYVLSAYVRDVDAKPEASVWGSRLPFNTVCAEYPSGGWVHAVGFSPSGNALAYAGHDSSVTIAYPSAPEQPPRALITVKLSQLPLRSLLWANESAIVAAGYNYSPILLQGNESGWAHTRDLDAGTSKTSFTHTGNTGEGREEEGPVSFTALRSTFRNMDLKGSSQSISSLPTVHQNMIATLRPYAGTPGNITAFTSSGTDGRVVLWTL.

WD repeat units follow at residues 9-48 (ILPK…WKHA), 53-92 (DHDK…TWKQ), 98-139 (RLNR…WVSK), 144-183 (PLRS…VDAK), and 203-242 (PSGG…QPPR). Residues 293 to 313 (GTSKTSFTHTGNTGEGREEEG) are disordered. The WD 6 repeat unit spans residues 342-376 (VHQNMIATLRPYAGTPGNITAFTSSGTDGRVVLWT).

The protein belongs to the WD repeat ARPC1 family. In terms of assembly, component of the Arp2/3 complex composed of arp2, act2, arc1/p41-ARC, arc2/p34-ARC, arc3/p21-ARC, arc4/p20-ARC and arc5/p16-ARC.

It is found in the cytoplasm. The protein resides in the cytoskeleton. It localises to the actin patch. Its function is as follows. Functions as a component of the Arp2/3 complex which is involved in regulation of actin polymerization and together with an activating nucleation-promoting factor (NPF) mediates the formation of branched actin networks. This chain is Actin-related protein 2/3 complex subunit 1 (arc1), found in Schizosaccharomyces pombe (strain 972 / ATCC 24843) (Fission yeast).